Here is a 112-residue protein sequence, read N- to C-terminus: MGGCSTRGKRPSALSLLLLLLLSGIAASALPLESGPTGQDSVQDATGGRRTGLLTFLAWWHEWASQDSSSTAFEGGTPELSKRQERPPLQQPPHRDKKPCKNFFWKTFSSCK.

The first 27 residues, 1 to 27, serve as a signal peptide directing secretion; it reads MGGCSTRGKRPSALSLLLLLLLSGIAA. Residues 28 to 81 constitute a propeptide that is removed on maturation; sequence SALPLESGPTGQDSVQDATGGRRTGLLTFLAWWHEWASQDSSSTAFEGGTPELS. The disordered stretch occupies residues 66 to 101; sequence QDSSSTAFEGGTPELSKRQERPPLQQPPHRDKKPCK. Cysteines 100 and 111 form a disulfide.

This sequence belongs to the somatostatin family. In terms of tissue distribution, interneurons in the cerebral cortex and hippocampus.

It is found in the secreted. Neuropeptide with neuronal depressant and sleep-modulating properties. The sequence is that of Cortistatin (Cort) from Rattus norvegicus (Rat).